Here is a 346-residue protein sequence, read N- to C-terminus: Holliday junction branch migration complex subunit RuvB (346 aa).

Residues 1–182 form a large ATPase domain (RuvB-L) region; that stretch reads MSEPARLISP…FGIPVRLSFY (182 aa). Residues L21, R22, G63, K66, T67, T68, 129 to 131, R172, Y182, and R219 contribute to the ATP site; that span reads EDF. T67 lines the Mg(2+) pocket. The segment at 183-253 is small ATPAse domain (RuvB-S); the sequence is TVEELELIVR…IADEALTRLL (71 aa). The interval 256–346 is head domain (RuvB-H); sequence NVGFDQLDKR…AQFRLFQEDD (91 aa). R292, R311, and R316 together coordinate DNA.

The protein belongs to the RuvB family. As to quaternary structure, homohexamer. Forms an RuvA(8)-RuvB(12)-Holliday junction (HJ) complex. HJ DNA is sandwiched between 2 RuvA tetramers; dsDNA enters through RuvA and exits via RuvB. An RuvB hexamer assembles on each DNA strand where it exits the tetramer. Each RuvB hexamer is contacted by two RuvA subunits (via domain III) on 2 adjacent RuvB subunits; this complex drives branch migration. In the full resolvosome a probable DNA-RuvA(4)-RuvB(12)-RuvC(2) complex forms which resolves the HJ.

It localises to the cytoplasm. It catalyses the reaction ATP + H2O = ADP + phosphate + H(+). Functionally, the RuvA-RuvB-RuvC complex processes Holliday junction (HJ) DNA during genetic recombination and DNA repair, while the RuvA-RuvB complex plays an important role in the rescue of blocked DNA replication forks via replication fork reversal (RFR). RuvA specifically binds to HJ cruciform DNA, conferring on it an open structure. The RuvB hexamer acts as an ATP-dependent pump, pulling dsDNA into and through the RuvAB complex. RuvB forms 2 homohexamers on either side of HJ DNA bound by 1 or 2 RuvA tetramers; 4 subunits per hexamer contact DNA at a time. Coordinated motions by a converter formed by DNA-disengaged RuvB subunits stimulates ATP hydrolysis and nucleotide exchange. Immobilization of the converter enables RuvB to convert the ATP-contained energy into a lever motion, pulling 2 nucleotides of DNA out of the RuvA tetramer per ATP hydrolyzed, thus driving DNA branch migration. The RuvB motors rotate together with the DNA substrate, which together with the progressing nucleotide cycle form the mechanistic basis for DNA recombination by continuous HJ branch migration. Branch migration allows RuvC to scan DNA until it finds its consensus sequence, where it cleaves and resolves cruciform DNA. The polypeptide is Holliday junction branch migration complex subunit RuvB (Rhizobium etli (strain CIAT 652)).